The chain runs to 110 residues: Phosphoribosyl-ATP pyrophosphatase (110 aa).

The protein belongs to the PRA-PH family.

Its subcellular location is the cytoplasm. It catalyses the reaction 1-(5-phospho-beta-D-ribosyl)-ATP + H2O = 1-(5-phospho-beta-D-ribosyl)-5'-AMP + diphosphate + H(+). It participates in amino-acid biosynthesis; L-histidine biosynthesis; L-histidine from 5-phospho-alpha-D-ribose 1-diphosphate: step 2/9. In Pseudomonas fluorescens (strain SBW25), this protein is Phosphoribosyl-ATP pyrophosphatase.